The following is a 661-amino-acid chain: Pumilio domain-containing protein C56F2.08c (661 aa).

One can recognise an RRM domain in the interval 1 to 74 (MLYVSNLPVG…GPVQVMLAKP (74 aa)). At serine 102 the chain carries Phosphoserine. Threonine 104 is modified (phosphothreonine). Position 105 is a phosphoserine (serine 105). A PUM-HD domain is found at 129-482 (INLDIVDSMI…RLMEEVGMTS (354 aa)). Pumilio repeat units lie at residues 191-226 (SMLD…AMLE), 227-263 (RIAP…LIVK), 264-302 (HLRP…VMAR), and 374-410 (HLAT…LLLK). 4 positions are modified to phosphoserine: serine 482, serine 486, serine 488, and serine 490.

It localises to the cytoplasm. The protein is Pumilio domain-containing protein C56F2.08c of Schizosaccharomyces pombe (strain 972 / ATCC 24843) (Fission yeast).